Consider the following 849-residue polypeptide: Villin-1 (849 aa).

Gelsolin-like repeat units lie at residues Ile-30–Leu-107, Arg-147–Lys-213, Val-262–Phe-335, Gln-405–Phe-475, and Ala-527–Leu-566. A disordered region spans residues Glu-739–Arg-849. Composition is skewed to low complexity over residues Lys-747–Thr-782 and Pro-791–Ser-823.

It belongs to the villin/gelsolin family. Expressed in roots, young leaves, and inflorescences, mostly in the vasculature of roots, leaves, and filaments of the anthers. Also detected in guard cells.

The protein localises to the cytoplasm. The protein resides in the cytoskeleton. Functionally, ca(2+)-independent actin-binding protein. Binds actin microfilaments (MFs). Involved in actin filament bundling, severing and capping. Caps the barbed end of actin filaments and protects them from disassembly. Promotes VLN3-mediated MF severing. This is Villin-1 from Oryza sativa subsp. japonica (Rice).